We begin with the raw amino-acid sequence, 129 residues long: MPKTVIIPPGTGTPIAPFSPGTLADGIVYVSGTLAFDKDNNVANPDDAEAQTRQVLETIKSVIETAGGTMDDVTMNHIFLTDWSNYQTINKVYAEYFPGDKPARYCIQCGLVKPGFVVEIASVAHIGKT.

Belongs to the RutC family.

It carries out the reaction (Z)-3-aminoacrylate + H2O + H(+) = 3-oxopropanoate + NH4(+). In terms of biological role, involved in pyrimidine catabolism. Catalyzes the deamination of 3-aminoacrylate to malonic semialdehyde, a reaction that can also occur spontaneously. RutC may facilitate the reaction and modulate the metabolic fitness, rather than catalyzing essential functions. The sequence is that of 3-aminoacrylate deaminase RutC from Caulobacter sp. (strain K31).